Consider the following 65-residue polypeptide: Alpha-toxin Bot11 (65 aa).

Positions 2–64 (KDGYIVDDRN…VRTVQAGRCR (63 aa)) constitute an LCN-type CS-alpha/beta domain. Intrachain disulfides connect cysteine 12/cysteine 63, cysteine 16/cysteine 36, cysteine 22/cysteine 46, and cysteine 26/cysteine 48.

Belongs to the long (4 C-C) scorpion toxin superfamily. Sodium channel inhibitor family. Alpha subfamily. Expressed by the venom gland.

The protein localises to the secreted. Its function is as follows. Alpha toxins bind voltage-independently at site-3 of sodium channels (Nav) and inhibit the inactivation of the activated channels, thereby blocking neuronal transmission. This is Alpha-toxin Bot11 from Buthus occitanus tunetanus (Common European scorpion).